The primary structure comprises 334 residues: GTP 3',8-cyclase (334 aa).

A Radical SAM core domain is found at 8-244 (RYGRPLRDLR…GEVAQRHAFA (237 aa)). GTP is bound at residue R17. Positions 24 and 28 each coordinate [4Fe-4S] cluster. Residue Y30 participates in S-adenosyl-L-methionine binding. Residue C31 participates in [4Fe-4S] cluster binding. R70 is a GTP binding site. G74 provides a ligand contact to S-adenosyl-L-methionine. T101 contacts GTP. Residue S125 participates in S-adenosyl-L-methionine binding. A GTP-binding site is contributed by K163. M197 is a binding site for S-adenosyl-L-methionine. Residues C261 and C264 each coordinate [4Fe-4S] cluster. 266–268 (RAR) lines the GTP pocket. Position 278 (C278) interacts with [4Fe-4S] cluster.

It belongs to the radical SAM superfamily. MoaA family. In terms of assembly, monomer and homodimer. The cofactor is [4Fe-4S] cluster.

It carries out the reaction GTP + AH2 + S-adenosyl-L-methionine = (8S)-3',8-cyclo-7,8-dihydroguanosine 5'-triphosphate + 5'-deoxyadenosine + L-methionine + A + H(+). It functions in the pathway cofactor biosynthesis; molybdopterin biosynthesis. Catalyzes the cyclization of GTP to (8S)-3',8-cyclo-7,8-dihydroguanosine 5'-triphosphate. The polypeptide is GTP 3',8-cyclase (Xanthomonas axonopodis pv. citri (strain 306)).